The sequence spans 410 residues: Serine hydroxymethyltransferase (410 aa).

(6S)-5,6,7,8-tetrahydrofolate-binding positions include leucine 116 and glycine 120–leucine 122. Lysine 225 carries the post-translational modification N6-(pyridoxal phosphate)lysine.

This sequence belongs to the SHMT family. Homodimer. Pyridoxal 5'-phosphate serves as cofactor.

It localises to the cytoplasm. It carries out the reaction (6R)-5,10-methylene-5,6,7,8-tetrahydrofolate + glycine + H2O = (6S)-5,6,7,8-tetrahydrofolate + L-serine. It functions in the pathway one-carbon metabolism; tetrahydrofolate interconversion. Its pathway is amino-acid biosynthesis; glycine biosynthesis; glycine from L-serine: step 1/1. Its function is as follows. Catalyzes the reversible interconversion of serine and glycine with tetrahydrofolate (THF) serving as the one-carbon carrier. This reaction serves as the major source of one-carbon groups required for the biosynthesis of purines, thymidylate, methionine, and other important biomolecules. Also exhibits THF-independent aldolase activity toward beta-hydroxyamino acids, producing glycine and aldehydes, via a retro-aldol mechanism. The sequence is that of Serine hydroxymethyltransferase from Lacticaseibacillus casei (strain BL23) (Lactobacillus casei).